The sequence spans 170 residues: Cyclic pyranopterin monophosphate synthase (170 aa).

Substrate is bound by residues 75-77 (MCH) and 115-116 (ME). The active site involves Asp130.

This sequence belongs to the MoaC family. Homohexamer; trimer of dimers.

It catalyses the reaction (8S)-3',8-cyclo-7,8-dihydroguanosine 5'-triphosphate = cyclic pyranopterin phosphate + diphosphate. Its pathway is cofactor biosynthesis; molybdopterin biosynthesis. In terms of biological role, catalyzes the conversion of (8S)-3',8-cyclo-7,8-dihydroguanosine 5'-triphosphate to cyclic pyranopterin monophosphate (cPMP). The chain is Cyclic pyranopterin monophosphate synthase from Bacillus subtilis (strain 168).